The following is a 160-amino-acid chain: Cell cycle regulator of non-homologous end joining (160 aa).

At methionine 1 the chain carries N-acetylmethionine. A KBM motif is present at residues 1 to 21 (METLKSDNKKRVLPSWMTAPG). Positions 78–152 (KPWEQPSLVA…EGKEEEDELK (75 aa)) are disordered. Residues 99-109 (ESPHTSSPGSS) are compositionally biased toward low complexity. The XLM signature appears at 150-160 (ELKYVREIFFS).

In terms of assembly, interacts (via KBM motif) with XRCC5/Ku80 and XRCC6/Ku70 heterodimer. Interacts (via XLF motif) with TRIM28/KAP1, ATM, MRE11, NBN and RAD50. Interacts with splicing factor SF3B1. Interacts with ERCC6L2; this interaction is DNA independent.

It is found in the cytoplasm. It localises to the nucleus. The protein localises to the chromosome. Functionally, cell-cycle-specific regulator of classical non-homologous end joining (NHEJ) of DNA double-strand break (DSB) repair, which can act both as an activator or inhibitor of NHEJ, depending on the cell cycle phase. Acts as a regulator of DNA repair pathway choice by specifically inhibiting classical NHEJ during the S and G2 phases, thereby promoting error-free repair by homologous recombination during cell cycle phases when sister chromatids are present. Preferentially protects single-stranded overhangs at break sites by inhibiting classical NHEJ, thereby creating a local environment that favors homologous recombination. Acts via interaction with XRCC5/Ku80 and XRCC6/Ku70. In contrast, acts as an activator of NHEJ during G1 phase of the cell cycle: promotes classical NHEJ in G1 phase cells via multivalent interactions that increase the affinity of DNA damage response proteins for DSB-associated chromatin. Also involved in immunoglobulin V(D)J recombination. May also act as an indirect regulator of proteasome. The sequence is that of Cell cycle regulator of non-homologous end joining from Rattus norvegicus (Rat).